The primary structure comprises 136 residues: DNA-directed RNA polymerase subunit omega (136 aa).

The segment at 79-107 (EPEAETVPLLSSSPAAAAVAPQSSSDDAA) is disordered. Positions 89-107 (SSSPAAAAVAPQSSSDDAA) are enriched in low complexity.

Belongs to the RNA polymerase subunit omega family. In terms of assembly, the RNAP catalytic core consists of 2 alpha, 1 beta, 1 beta' and 1 omega subunit. When a sigma factor is associated with the core the holoenzyme is formed, which can initiate transcription.

The catalysed reaction is RNA(n) + a ribonucleoside 5'-triphosphate = RNA(n+1) + diphosphate. In terms of biological role, promotes RNA polymerase assembly. Latches the N- and C-terminal regions of the beta' subunit thereby facilitating its interaction with the beta and alpha subunits. This chain is DNA-directed RNA polymerase subunit omega, found in Methylobacterium radiotolerans (strain ATCC 27329 / DSM 1819 / JCM 2831 / NBRC 15690 / NCIMB 10815 / 0-1).